The sequence spans 149 residues: Large ribosomal subunit protein uL11 (149 aa).

The protein belongs to the universal ribosomal protein uL11 family. Part of the ribosomal stalk of the 50S ribosomal subunit. Interacts with L10 and the large rRNA to form the base of the stalk. L10 forms an elongated spine to which L12 dimers bind in a sequential fashion forming a multimeric L10(L12)X complex. In terms of processing, one or more lysine residues are methylated.

Functionally, forms part of the ribosomal stalk which helps the ribosome interact with GTP-bound translation factors. The protein is Large ribosomal subunit protein uL11 of Methylobacterium radiotolerans (strain ATCC 27329 / DSM 1819 / JCM 2831 / NBRC 15690 / NCIMB 10815 / 0-1).